The following is a 179-amino-acid chain: Cell division protein ZapC (179 aa).

The protein belongs to the ZapC family. As to quaternary structure, interacts directly with FtsZ.

Its subcellular location is the cytoplasm. In terms of biological role, contributes to the efficiency of the cell division process by stabilizing the polymeric form of the cell division protein FtsZ. Acts by promoting interactions between FtsZ protofilaments and suppressing the GTPase activity of FtsZ. This is Cell division protein ZapC from Tolumonas auensis (strain DSM 9187 / NBRC 110442 / TA 4).